The sequence spans 530 residues: Per os infectivity factor 1 (530 aa).

Residues 1 to 15 form the signal peptide; sequence MHFAIILLFLLVIIA.

In terms of assembly, forms the PIF complex together with PIF2 and PIF3. The complex also interacts with per os infectivity factor PIF0.

It localises to the virion membrane. Functionally, per os infectivity factor that mediates the specific binding of occluded virions (ODV) to the host midgut target cells. In Autographa californica nuclear polyhedrosis virus (AcMNPV), this protein is Per os infectivity factor 1.